The chain runs to 436 residues: ATP-dependent RNA helicase RhlB (436 aa).

Positions glutamine 9 to alanine 37 match the Q motif motif. In terms of domain architecture, Helicase ATP-binding spans leucine 40–valine 219. Alanine 53 to threonine 60 is a binding site for ATP. Positions aspartate 165–aspartate 168 match the DEAD box motif. A Helicase C-terminal domain is found at lysine 243–leucine 390. The segment at aspartate 392 to serine 436 is disordered. Positions glycine 425 to serine 436 are enriched in basic residues.

It belongs to the DEAD box helicase family. RhlB subfamily. As to quaternary structure, component of the RNA degradosome, which is a multiprotein complex involved in RNA processing and mRNA degradation.

It is found in the cytoplasm. The enzyme catalyses ATP + H2O = ADP + phosphate + H(+). Functionally, DEAD-box RNA helicase involved in RNA degradation. Has RNA-dependent ATPase activity and unwinds double-stranded RNA. The sequence is that of ATP-dependent RNA helicase RhlB from Shewanella pealeana (strain ATCC 700345 / ANG-SQ1).